The sequence spans 334 residues: Atypical chemokine receptor 1 (334 aa).

At M1–P61 the chain is on the extracellular side. Residues N16, N26, and N32 are each glycosylated (N-linked (GlcNAc...) asparagine). 2 cysteine pairs are disulfide-bonded: C49–C274 and C127–C193. A helical transmembrane segment spans residues F62–L82. At R83–S93 the chain is on the cytoplasmic side. A helical membrane pass occupies residues W94–L114. Residues A115–C127 are Extracellular-facing. A helical membrane pass occupies residues N128–L151. Residues N152 to T164 are Cytoplasmic-facing. The helical transmembrane segment at L165–A185 threads the bilayer. At S186–K205 the chain is on the extracellular side. A helical membrane pass occupies residues Y206–A226. At K227–S242 the chain is on the cytoplasmic side. A helical transmembrane segment spans residues V243 to L263. Over V264 to N285 the chain is Extracellular. A glycan (N-linked (GlcNAc...) asparagine) is linked at N285. The helical transmembrane segment at V286 to C306 threads the bilayer. At H307–S334 the chain is on the cytoplasmic side.

It belongs to the G-protein coupled receptor 1 family. Atypical chemokine receptor subfamily. Expressed in liver and brain.

It localises to the early endosome. Its subcellular location is the recycling endosome. The protein resides in the membrane. Functionally, atypical chemokine receptor that controls chemokine levels and localization via high-affinity chemokine binding that is uncoupled from classic ligand-driven signal transduction cascades, resulting instead in chemokine sequestration, degradation, or transcytosis. Also known as interceptor (internalizing receptor) or chemokine-scavenging receptor or chemokine decoy receptor. Has a promiscuous chemokine-binding profile, interacting with inflammatory chemokines of both the CXC and the CC subfamilies but not with homeostatic chemokines. Acts as a receptor for chemokines including CCL2, CCL5, CCL7, CCL11, CCL13, CCL14, CCL17, CXCL5, CXCL6, IL8/CXCL8, CXCL11, GRO, RANTES, MCP-1 and TARC. May regulate chemokine bioavailability and, consequently, leukocyte recruitment through two distinct mechanisms: when expressed in endothelial cells, it sustains the abluminal to luminal transcytosis of tissue-derived chemokines and their subsequent presentation to circulating leukocytes; when expressed in erythrocytes, serves as blood reservoir of cognate chemokines but also as a chemokine sink, buffering potential surges in plasma chemokine levels. (Microbial infection) Acts as a receptor for the malaria parasite Plasmodium yoelii in mature erythrocytes but not reticulocytes. This Mus musculus (Mouse) protein is Atypical chemokine receptor 1 (Ackr1).